Consider the following 308-residue polypeptide: Porphobilinogen deaminase (308 aa).

At Cys-243 the chain carries S-(dipyrrolylmethanemethyl)cysteine.

It belongs to the HMBS family. In terms of assembly, monomer. Dipyrromethane is required as a cofactor.

The catalysed reaction is 4 porphobilinogen + H2O = hydroxymethylbilane + 4 NH4(+). It functions in the pathway porphyrin-containing compound metabolism; protoporphyrin-IX biosynthesis; coproporphyrinogen-III from 5-aminolevulinate: step 2/4. Functionally, tetrapolymerization of the monopyrrole PBG into the hydroxymethylbilane pre-uroporphyrinogen in several discrete steps. The sequence is that of Porphobilinogen deaminase from Mesorhizobium japonicum (strain LMG 29417 / CECT 9101 / MAFF 303099) (Mesorhizobium loti (strain MAFF 303099)).